The sequence spans 136 residues: Nucleoside diphosphate kinase (136 aa).

ATP contacts are provided by Lys-10, Phe-58, Arg-86, Thr-92, Arg-104, and Asn-114. The active-site Pros-phosphohistidine intermediate is the His-117.

Belongs to the NDK family. Homotetramer. The cofactor is Mg(2+).

Its subcellular location is the cytoplasm. It carries out the reaction a 2'-deoxyribonucleoside 5'-diphosphate + ATP = a 2'-deoxyribonucleoside 5'-triphosphate + ADP. The catalysed reaction is a ribonucleoside 5'-diphosphate + ATP = a ribonucleoside 5'-triphosphate + ADP. Major role in the synthesis of nucleoside triphosphates other than ATP. The ATP gamma phosphate is transferred to the NDP beta phosphate via a ping-pong mechanism, using a phosphorylated active-site intermediate. This is Nucleoside diphosphate kinase from Mycolicibacterium paratuberculosis (strain ATCC BAA-968 / K-10) (Mycobacterium paratuberculosis).